Here is a 108-residue protein sequence, read N- to C-terminus: DNA-directed RNA polymerase III subunit RPC10 (108 aa).

Zn(2+)-binding residues include Cys-5, Cys-8, Cys-25, Cys-28, Cys-69, and Cys-72. Residues 5–28 (CPGCGNGLIVEEGQRCHRFACNTC) form a C4-type zinc finger. The TFIIS-type zinc-finger motif lies at 65–107 (TAESCPKCEHPRAYFMQLQTRSADEPMTTFYKCCNAQCGHRWR). A Hairpin motif is present at residues 88–89 (DE). Cys-98 and Cys-102 together coordinate Zn(2+).

Belongs to the archaeal RpoM/eukaryotic RPA12/RPB9/RPC11 RNA polymerase family. Component of the RNA polymerase III complex consisting of 17 subunits: a ten-subunit horseshoe-shaped catalytic core composed of POLR3A/RPC1, POLR3B/RPC2, POLR1C/RPAC1, POLR1D/RPAC2, POLR3K/RPC10, POLR2E/RPABC1, POLR2F/RPABC2, POLR2H/RPABC3, POLR2K/RPABC4 and POLR2L/RPABC5; a mobile stalk composed of two subunits POLR3H/RPC8 and CRCP/RPC9, protruding from the core and functioning primarily in transcription initiation; and additional subunits homologous to general transcription factors of the RNA polymerase II machinery, POLR3C/RPC3-POLR3F/RPC6-POLR3G/RPC7 heterotrimer required for transcription initiation and POLR3D/RPC4-POLR3E/RPC5 heterodimer involved in both transcription initiation and termination.

It is found in the nucleus. Core component of RNA polymerase III (Pol III) which synthesizes small non-coding RNAs using the four ribonucleoside triphosphates as substrates. Can mediate Pol I proofreading of the nascent RNA transcript. Anchors into the Pol III active site to constantly monitor transcription fidelity, cleaves mis-incorporated 5'-ribonucleotides and restarts the transcription process. Once Pol III reaches the poly(dT) termination signal, can induce Pol III clamp opening and transcription termination. Pol III plays an important role in sensing and limiting infection by intracellular bacteria and DNA viruses. Acts as a nuclear and cytosolic DNA sensor involved in innate immune response. Can sense non-self dsDNA that serves as template for transcription into dsRNA. The non-self RNA polymerase III transcripts, such as Epstein-Barr virus-encoded RNAs (EBERs) induce type I interferon and NF-kappa-B through the RIG-I pathway. The polypeptide is DNA-directed RNA polymerase III subunit RPC10 (Homo sapiens (Human)).